We begin with the raw amino-acid sequence, 418 residues long: Tyrosine--tRNA ligase (418 aa).

Residue Tyr34 participates in L-tyrosine binding. A 'HIGH' region motif is present at residues 39-48 (PTADSLHLGH). 2 residues coordinate L-tyrosine: Tyr169 and Gln173. The 'KMSKS' region motif lies at 229 to 233 (KFGKS). Lys232 is an ATP binding site. The S4 RNA-binding domain maps to 352 to 418 (LNLVDMLVTA…GKKKYAVLTY (67 aa)).

Belongs to the class-I aminoacyl-tRNA synthetase family. TyrS type 1 subfamily. Homodimer.

It localises to the cytoplasm. It catalyses the reaction tRNA(Tyr) + L-tyrosine + ATP = L-tyrosyl-tRNA(Tyr) + AMP + diphosphate + H(+). Catalyzes the attachment of tyrosine to tRNA(Tyr) in a two-step reaction: tyrosine is first activated by ATP to form Tyr-AMP and then transferred to the acceptor end of tRNA(Tyr). This chain is Tyrosine--tRNA ligase, found in Streptococcus pyogenes serotype M28 (strain MGAS6180).